A 131-amino-acid chain; its full sequence is Con-Ins Q1 (131 aa).

Positions 1-24 are cleaved as a signal peptide; that stretch reads MTTSSYFLLVALGLLLYLCQSSFG. 4 disulfide bridges follow: Cys29/Cys107, Cys41/Cys110, Cys53/Cys123, and Cys109/Cys114. Positions 59–92 are cleaved as a propeptide — c peptide; that stretch reads LQGGTDDARKKRGRASLLRKRRGFLSMLKARAKR. 4-carboxyglutamate; partial is present on Glu118. Ser130 is modified (serine amide).

This sequence belongs to the insulin family. As to quaternary structure, heterodimer of A and B chains; disulfide-linked. As to expression, expressed by the venom gland.

The protein localises to the secreted. In terms of biological role, this venom insulin facilitates prey capture by rapidly inducing hypoglycemic shock. Intraperitoneal injection of this peptide into zebrafish lowers blood glucose with the same potency than human insulin. In vivo, when applied to water, this peptide reduces overall locomotor activity of zebrafish larvae, observed as a significant decrease in the percentage of time spent swimming and movement frequency. This chain is Con-Ins Q1, found in Conus quercinus (Oak cone).